Reading from the N-terminus, the 184-residue chain is NADH-quinone oxidoreductase subunit B (184 aa).

[4Fe-4S] cluster contacts are provided by C37, C38, C103, and C132.

It belongs to the complex I 20 kDa subunit family. In terms of assembly, NDH-1 is composed of 14 different subunits. Subunits NuoB, C, D, E, F, and G constitute the peripheral sector of the complex. [4Fe-4S] cluster serves as cofactor.

The protein localises to the cell membrane. The enzyme catalyses a quinone + NADH + 5 H(+)(in) = a quinol + NAD(+) + 4 H(+)(out). NDH-1 shuttles electrons from NADH, via FMN and iron-sulfur (Fe-S) centers, to quinones in the respiratory chain. The immediate electron acceptor for the enzyme in this species is believed to be a menaquinone. Couples the redox reaction to proton translocation (for every two electrons transferred, four hydrogen ions are translocated across the cytoplasmic membrane), and thus conserves the redox energy in a proton gradient. This chain is NADH-quinone oxidoreductase subunit B, found in Mycobacteroides abscessus (strain ATCC 19977 / DSM 44196 / CCUG 20993 / CIP 104536 / JCM 13569 / NCTC 13031 / TMC 1543 / L948) (Mycobacterium abscessus).